The chain runs to 348 residues: Alcohol dehydrogenase 1 (348 aa).

Zn(2+)-binding residues include C44, H67, C98, C101, C104, C112, and C154. NAD(+)-binding positions include 178–184 (GACGGLG), D202, K207, 269–271 (VGL), and R341.

It belongs to the zinc-containing alcohol dehydrogenase family. As to quaternary structure, homotetramer. Zn(2+) serves as cofactor.

It localises to the cytoplasm. It catalyses the reaction a primary alcohol + NAD(+) = an aldehyde + NADH + H(+). The enzyme catalyses a secondary alcohol + NAD(+) = a ketone + NADH + H(+). The sequence is that of Alcohol dehydrogenase 1 (ADH1) from Kluyveromyces marxianus (Yeast).